A 348-amino-acid chain; its full sequence is Histone PARylation factor 1 (348 aa).

Basic residues predominate over residues 1–10; that stretch reads MAGRGKRKPR. The tract at residues 1 to 38 is disordered; sequence MAGRGKRKPRSLPQTETPNGEVKKAKEGLKDDKTSVGE. Over residues 21-38 the composition is skewed to basic and acidic residues; that stretch reads EVKKAKEGLKDDKTSVGE. The stretch at 170-200 forms a coiled coil; it reads LQKKKKEKRQQKDDAALNRLEEDLKREAERL. E285 serves as the catalytic Proton donor.

It belongs to the HPF1 family. Interacts with PARP1 (via the PARP catalytic domain). Interacts with PARP2 (via the PARP catalytic domain). Interacts with core nucleosomes in a parp1- and parp2-dependent manner. As to expression, in adult, mainly expressed in gonads.

Its subcellular location is the chromosome. The protein localises to the nucleus. In terms of biological role, cofactor for serine ADP-ribosylation that confers serine specificity on parp1 and parp2 and plays a key role in DNA damage response. Initiates the repair of double-strand DNA breaks: recruited to DNA damage sites by parp1 and parp2 and switches the amino acid specificity of parp1 and parp2 from aspartate or glutamate to serine residues, licensing serine ADP-ribosylation of target proteins. Serine ADP-ribosylation of target proteins, such as histones, promotes decompaction of chromatin and the recruitment of repair factors leading to the reparation of DNA strand breaks. Serine ADP-ribosylation of proteins constitutes the primary form of ADP-ribosylation of proteins in response to DNA damage. Hpf1 acts by completing the active site of parp1 and parp2: forms a composite active site composed of residues from Hpf1 and parp1 or parp2. While hpf1 promotes the initiation of serine ADP-ribosylation, it restricts the polymerase activity of parp1 and parp2 in order to limit the length of poly-ADP-ribose chains. Hpf1 also promotes tyrosine ADP-ribosylation, probably by conferring tyrosine specificity on parp1. This Danio rerio (Zebrafish) protein is Histone PARylation factor 1.